The sequence spans 126 residues: Protein ApaG (126 aa).

Residues 2–126 enclose the ApaG domain; sequence SDPRYQIDVS…FRLAVPGALH (125 aa).

The protein is Protein ApaG of Ectopseudomonas mendocina (strain ymp) (Pseudomonas mendocina).